Reading from the N-terminus, the 354-residue chain is Phenylalanine--tRNA ligase alpha subunit (354 aa).

Glu-279 contributes to the Mg(2+) binding site.

This sequence belongs to the class-II aminoacyl-tRNA synthetase family. Phe-tRNA synthetase alpha subunit type 1 subfamily. As to quaternary structure, tetramer of two alpha and two beta subunits. The cofactor is Mg(2+).

The protein localises to the cytoplasm. It carries out the reaction tRNA(Phe) + L-phenylalanine + ATP = L-phenylalanyl-tRNA(Phe) + AMP + diphosphate + H(+). This chain is Phenylalanine--tRNA ligase alpha subunit, found in Cupriavidus pinatubonensis (strain JMP 134 / LMG 1197) (Cupriavidus necator (strain JMP 134)).